The following is a 317-amino-acid chain: TTVAATKLTSLKATAGKLGYREICQVRQWAPLKSAMPHFGMLRCATSTVVKAQAQAQATATEQTTEEAVPKVESPVVVVTGASRGIGKAIALSLGKAGCKVLVNYARSAKEAEEVSKQIEEYGGEAITFGGDVSKEADVDSMMKTAVDKWGTIDVVVNNAGITRDTLLIRMKKSQWDEVIDLNLTGVFLCTQAATKIMMKKRKGRIINIASVVGLIGNIGQANYAAAKAGVIGFSKTAAREGASRNINVNVVCPGFIASDMTAKLGEDMEKKILGTIPLGRYGQPEYVAGLVEFLALSPASSYITGHTFSIHGGFAI.

The transit peptide at 1–57 (TTVAATKLTSLKATAGKLGYREICQVRQWAPLKSAMPHFGMLRCATSTVVKAQAQAQ) directs the protein to the chloroplast. 79–103 (VTGASRGIGKAIALSLGKAGCKVLV) contributes to the NADP(+) binding site. Position 211 (S211) interacts with substrate. Catalysis depends on Y224, which acts as the Proton acceptor.

This sequence belongs to the short-chain dehydrogenases/reductases (SDR) family. As to quaternary structure, homotetramer.

The protein localises to the plastid. Its subcellular location is the chloroplast. The catalysed reaction is a (3R)-hydroxyacyl-[ACP] + NADP(+) = a 3-oxoacyl-[ACP] + NADPH + H(+). It functions in the pathway lipid metabolism; fatty acid biosynthesis. This chain is 3-oxoacyl-[acyl-carrier-protein] reductase 5, chloroplastic (bkr1), found in Brassica napus (Rape).